We begin with the raw amino-acid sequence, 60 residues long: Small ribosomal subunit protein bS21 (60 aa).

The interval arginine 35–arginine 60 is disordered. The span at valine 43 to arginine 60 shows a compositional bias: basic residues.

Belongs to the bacterial ribosomal protein bS21 family.

In Clostridium novyi (strain NT), this protein is Small ribosomal subunit protein bS21.